The following is a 409-amino-acid chain: Peptidase T (409 aa).

H78 is a binding site for Zn(2+). Residue D80 is part of the active site. Zn(2+) is bound at residue D141. The active-site Proton acceptor is the E175. Zn(2+)-binding residues include E176, D198, and H380.

This sequence belongs to the peptidase M20B family. Zn(2+) serves as cofactor.

It is found in the cytoplasm. The enzyme catalyses Release of the N-terminal residue from a tripeptide.. Functionally, cleaves the N-terminal amino acid of tripeptides. This chain is Peptidase T, found in Caldanaerobacter subterraneus subsp. tengcongensis (strain DSM 15242 / JCM 11007 / NBRC 100824 / MB4) (Thermoanaerobacter tengcongensis).